A 230-amino-acid chain; its full sequence is Translation initiation factor IF-3 (230 aa).

Disordered stretches follow at residues 1 to 21 (MAIQHRDPRGGGGSRDARTNR) and 184 to 230 (LQSQ…AAQR). Residues 193-208 (AAAAAAPAAAPAAGAP) are compositionally biased toward low complexity. Residues 209–220 (APAPAPAAPAPA) are compositionally biased toward pro residues. Residues 221-230 (PTAADPAAQR) show a composition bias toward low complexity.

This sequence belongs to the IF-3 family. Monomer.

It localises to the cytoplasm. Its function is as follows. IF-3 binds to the 30S ribosomal subunit and shifts the equilibrium between 70S ribosomes and their 50S and 30S subunits in favor of the free subunits, thus enhancing the availability of 30S subunits on which protein synthesis initiation begins. The protein is Translation initiation factor IF-3 of Anaeromyxobacter dehalogenans (strain 2CP-1 / ATCC BAA-258).